The primary structure comprises 469 residues: Glutamate--tRNA ligase (469 aa).

Positions 10–20 (PSPTGYLHVGG) match the 'HIGH' region motif. Positions 99, 101, 126, and 128 each coordinate Zn(2+). Positions 238–242 (RLSKR) match the 'KMSKS' region motif. Lys241 is an ATP binding site.

Belongs to the class-I aminoacyl-tRNA synthetase family. Glutamate--tRNA ligase type 1 subfamily. In terms of assembly, monomer. It depends on Zn(2+) as a cofactor.

Its subcellular location is the cytoplasm. It carries out the reaction tRNA(Glu) + L-glutamate + ATP = L-glutamyl-tRNA(Glu) + AMP + diphosphate. Functionally, catalyzes the attachment of glutamate to tRNA(Glu) in a two-step reaction: glutamate is first activated by ATP to form Glu-AMP and then transferred to the acceptor end of tRNA(Glu). The polypeptide is Glutamate--tRNA ligase (Pelobacter propionicus (strain DSM 2379 / NBRC 103807 / OttBd1)).